A 404-amino-acid polypeptide reads, in one-letter code: Zinc finger CCCH domain-containing protein 3 (404 aa).

5 consecutive C3H1-type zinc fingers follow at residues 47 to 75 (RPGE…HPTH), 90 to 118 (RIGQ…HPKD), 135 to 163 (RLGE…HPQP), 261 to 289 (SSDQ…HPGV), and 307 to 335 (RPGQ…HPML). Positions 350-374 (FASPVTTHQRISPTPNRSDSKSLSN) are enriched in polar residues. The tract at residues 350–404 (FASPVTTHQRISPTPNRSDSKSLSNGKPDVKKESSETEKPDNGEVQDLSEDASSP) is disordered. Residues 377–391 (PDVKKESSETEKPDN) show a composition bias toward basic and acidic residues.

The protein localises to the nucleus. Possesses RNA-binding and ribonuclease activities in vitro. This chain is Zinc finger CCCH domain-containing protein 3, found in Arabidopsis thaliana (Mouse-ear cress).